A 121-amino-acid polypeptide reads, in one-letter code: Large ribosomal subunit protein bL12 (121 aa).

This sequence belongs to the bacterial ribosomal protein bL12 family. In terms of assembly, homodimer. Part of the ribosomal stalk of the 50S ribosomal subunit. Forms a multimeric L10(L12)X complex, where L10 forms an elongated spine to which 2 to 4 L12 dimers bind in a sequential fashion. Binds GTP-bound translation factors.

In terms of biological role, forms part of the ribosomal stalk which helps the ribosome interact with GTP-bound translation factors. Is thus essential for accurate translation. In Pseudomonas fluorescens (strain SBW25), this protein is Large ribosomal subunit protein bL12.